Reading from the N-terminus, the 365-residue chain is MIMPRYLGLMSGTSMDGMDIVLIEQGDRTTLLASHYLPMPADLREDILALCAPGPDEIARAADVERRWVGLAAQGVGELLRQQRLAPGAVRAIGSHGQTIRHEPARHFTVQIGNPALLAELTGIDVIADFRRRDVAAGGQGAPLVPAFHQALFGDSGKARAILNIGGFSNVSLLAPGKPVRGFDCGPGNVLMDAWIHCRRGEHFDRDGAWAASGRVNDDLLASLLADEFFATRGPKSTGRERFNLAWLQERLAGHPVLPAEDVQATLLELSARSISESLLDAQPECEEVLVCGGGAFNAALMARLAALMPAARIASTDAYGIPPAWMEGMAFAWLAHRFLERLPGNCPDVTGAAGPRVLGALYPA.

ATP is bound at residue 12-19; that stretch reads GTSMDGMD.

The protein belongs to the anhydro-N-acetylmuramic acid kinase family.

It carries out the reaction 1,6-anhydro-N-acetyl-beta-muramate + ATP + H2O = N-acetyl-D-muramate 6-phosphate + ADP + H(+). Its pathway is amino-sugar metabolism; 1,6-anhydro-N-acetylmuramate degradation. It functions in the pathway cell wall biogenesis; peptidoglycan recycling. Catalyzes the specific phosphorylation of 1,6-anhydro-N-acetylmuramic acid (anhMurNAc) with the simultaneous cleavage of the 1,6-anhydro ring, generating MurNAc-6-P. Is required for the utilization of anhMurNAc either imported from the medium or derived from its own cell wall murein, and thus plays a role in cell wall recycling. The sequence is that of Anhydro-N-acetylmuramic acid kinase from Pseudomonas paraeruginosa (strain DSM 24068 / PA7) (Pseudomonas aeruginosa (strain PA7)).